The primary structure comprises 347 residues: Quinolinate synthase (347 aa).

Iminosuccinate is bound by residues His47 and Ser68. Cys113 provides a ligand contact to [4Fe-4S] cluster. Residues Tyr139 to Asn141 and Ser156 contribute to the iminosuccinate site. Cys200 contacts [4Fe-4S] cluster. Residues His226–Glu228 and Thr243 each bind iminosuccinate. Cys297 contacts [4Fe-4S] cluster.

It belongs to the quinolinate synthase family. Type 1 subfamily. [4Fe-4S] cluster serves as cofactor.

Its subcellular location is the cytoplasm. It catalyses the reaction iminosuccinate + dihydroxyacetone phosphate = quinolinate + phosphate + 2 H2O + H(+). It functions in the pathway cofactor biosynthesis; NAD(+) biosynthesis; quinolinate from iminoaspartate: step 1/1. Its function is as follows. Catalyzes the condensation of iminoaspartate with dihydroxyacetone phosphate to form quinolinate. The polypeptide is Quinolinate synthase (Escherichia coli (strain K12 / MC4100 / BW2952)).